We begin with the raw amino-acid sequence, 652 residues long: Probable protein phosphatase 2C 19 (652 aa).

A PPM-type phosphatase domain is found at 265-517; sequence KYVVSSMQGW…DNTTVILVLF (253 aa). Mn(2+)-binding residues include aspartate 300, glycine 301, glutamate 467, and aspartate 508. The tract at residues 524–567 is disordered; the sequence is AVPPVDTDTDTDSHTGDDVDNNDPANEVDPTANAGSDDSNTSDE.

The protein belongs to the PP2C family. Mg(2+) serves as cofactor. Requires Mn(2+) as cofactor.

It carries out the reaction O-phospho-L-seryl-[protein] + H2O = L-seryl-[protein] + phosphate. The enzyme catalyses O-phospho-L-threonyl-[protein] + H2O = L-threonyl-[protein] + phosphate. The sequence is that of Probable protein phosphatase 2C 19 from Oryza sativa subsp. japonica (Rice).